Reading from the N-terminus, the 224-residue chain is Glutathione S-transferase U28 (224 aa).

The region spanning 6-85 (SKVVVLDFWA…YIDETWTDAA (80 aa)) is the GST N-terminal domain. Glutathione-binding positions include 16-17 (SP), 42-43 (NK), 56-57 (KV), and 69-70 (ES). Residues 91–217 (DPQSRATARF…EKVYQQVLKL (127 aa)) form the GST C-terminal domain. Threonine 154 carries the post-translational modification Phosphothreonine.

This sequence belongs to the GST superfamily. Tau family.

The protein localises to the cytoplasm. It is found in the cytosol. The catalysed reaction is RX + glutathione = an S-substituted glutathione + a halide anion + H(+). May be involved in the conjugation of reduced glutathione to a wide number of exogenous and endogenous hydrophobic electrophiles and have a detoxification role against certain herbicides. The protein is Glutathione S-transferase U28 (GSTU28) of Arabidopsis thaliana (Mouse-ear cress).